A 393-amino-acid polypeptide reads, in one-letter code: L-methionine gamma-lyase (393 aa).

Residues 63–65 and 93–94 contribute to the pyridoxal 5'-phosphate site; these read YQR and GM. An L-homocysteine-binding site is contributed by Y119. Position 206-208 (206-208) interacts with pyridoxal 5'-phosphate; it reads SAT. At K209 the chain carries N6-(pyridoxal phosphate)lysine. R367 contributes to the L-homocysteine binding site. L-methionine is bound at residue R367.

Belongs to the trans-sulfuration enzymes family. L-methionine gamma-lyase subfamily. In terms of assembly, homotetramer. Pyridoxal 5'-phosphate is required as a cofactor.

It carries out the reaction L-methionine + H2O = methanethiol + 2-oxobutanoate + NH4(+). The enzyme catalyses L-homocysteine + H2O = 2-oxobutanoate + hydrogen sulfide + NH4(+) + H(+). Its function is as follows. Catalyzes the alpha,gamma-elimination of L-methionine to produce methanethiol, 2-oxobutanoate and ammonia. Is also able to catalyze the alpha,gamma-elimination of L-homocysteine. The protein is L-methionine gamma-lyase of Brevibacterium sandarakinum.